The sequence spans 179 residues: Transcription factor E (179 aa).

Residues Met1–Ala102 enclose the HTH TFE/IIEalpha-type domain.

This sequence belongs to the TFE family. In terms of assembly, monomer. Interaction with RNA polymerase subunits RpoF and RpoE is necessary for Tfe stimulatory transcription activity. Able to interact with Tbp and RNA polymerase in the absence of DNA promoter. Interacts both with the preinitiation and elongation complexes.

Transcription factor that plays a role in the activation of archaeal genes transcribed by RNA polymerase. Facilitates transcription initiation by enhancing TATA-box recognition by TATA-box-binding protein (Tbp), and transcription factor B (Tfb) and RNA polymerase recruitment. Not absolutely required for transcription in vitro, but particularly important in cases where Tbp or Tfb function is not optimal. It dynamically alters the nucleic acid-binding properties of RNA polymerases by stabilizing the initiation complex and destabilizing elongation complexes. Seems to translocate with the RNA polymerase following initiation and acts by binding to the non template strand of the transcription bubble in elongation complexes. The sequence is that of Transcription factor E from Methanosphaera stadtmanae (strain ATCC 43021 / DSM 3091 / JCM 11832 / MCB-3).